The chain runs to 90 residues: Secretoglobin family 1D member 2 (90 aa).

The first 21 residues, 1 to 21, serve as a signal peptide directing secretion; the sequence is MKLSVCLLLVTLALCCYQANA.

It belongs to the secretoglobin family. Lipophilin subfamily. Highest expression was found in skeletal muscle. Expressed as well in thymus, trachea, kidney, steroid responsive tissues (prostate, testis, uterus, breast and ovary) and salivary gland.

It localises to the secreted. Functionally, may bind androgens and other steroids, may also bind estramustine, a chemotherapeutic agent used for prostate cancer. May be under transcriptional regulation of steroid hormones. The protein is Secretoglobin family 1D member 2 (SCGB1D2) of Homo sapiens (Human).